Here is a 56-residue protein sequence, read N- to C-terminus: Small ribosomal subunit protein uS14 (56 aa).

Zn(2+) is bound by residues Cys-21, Cys-24, Cys-39, and Cys-42.

It belongs to the universal ribosomal protein uS14 family. As to quaternary structure, component of the 40S small ribosomal subunit. Zn(2+) serves as cofactor.

The protein localises to the cytoplasm. It is found in the cytosol. It localises to the rough endoplasmic reticulum. This Scarabaeus laticollis (Scarab dung beetle) protein is Small ribosomal subunit protein uS14 (RpS29).